Consider the following 342-residue polypeptide: MSQPPAAHVPVLYTQVLEGLQVTENGTYLDGTFGRGGHARGVLEHLGPGGRLLVMDKDPEAIAVAEHTFGGDARVSIHRGSFAGLGQVVAAATVDGILLDLGVSSPQLDVAGRGFSFGKDGPLDMRMDPDSGQSAAGWLAQATDREIADVLWTYGEERQSRRIARAIVARRGEQPLLRTAQLADLIASVMPRGDSKTHPATRSFQAIRIHINRELADLEAGLDAALGALKPGGRLAVISFHSLEDRIVKQFMARYAKAPPSNRRLPEAQPFVPTLQLVSGAIKADDSELAVNPRARSAVLRVAEKLGMENRESGMGKGHGAAASRFPTPDSRFPTSPNGDAP.

Residues G36–H38, D56, F82, D100, and Q107 contribute to the S-adenosyl-L-methionine site. The interval E309–P342 is disordered. A compositionally biased stretch (polar residues) spans F333–P342.

The protein belongs to the methyltransferase superfamily. RsmH family.

Its subcellular location is the cytoplasm. The catalysed reaction is cytidine(1402) in 16S rRNA + S-adenosyl-L-methionine = N(4)-methylcytidine(1402) in 16S rRNA + S-adenosyl-L-homocysteine + H(+). Specifically methylates the N4 position of cytidine in position 1402 (C1402) of 16S rRNA. This chain is Ribosomal RNA small subunit methyltransferase H, found in Xanthomonas campestris pv. campestris (strain B100).